A 275-amino-acid chain; its full sequence is Tryptophan synthase alpha chain (275 aa).

Catalysis depends on E51, which acts as the Proton acceptor.

This sequence belongs to the TrpA family. In terms of assembly, tetramer of two alpha and two beta chains.

The catalysed reaction is (1S,2R)-1-C-(indol-3-yl)glycerol 3-phosphate + L-serine = D-glyceraldehyde 3-phosphate + L-tryptophan + H2O. It participates in amino-acid biosynthesis; L-tryptophan biosynthesis; L-tryptophan from chorismate: step 5/5. In terms of biological role, the alpha subunit is responsible for the aldol cleavage of indoleglycerol phosphate to indole and glyceraldehyde 3-phosphate. The sequence is that of Tryptophan synthase alpha chain from Caulobacter vibrioides (strain ATCC 19089 / CIP 103742 / CB 15) (Caulobacter crescentus).